A 147-amino-acid chain; its full sequence is Large ribosomal subunit protein uL11 (147 aa).

The protein belongs to the universal ribosomal protein uL11 family. As to quaternary structure, part of the ribosomal stalk of the 50S ribosomal subunit. Interacts with L10 and the large rRNA to form the base of the stalk. L10 forms an elongated spine to which L12 dimers bind in a sequential fashion forming a multimeric L10(L12)X complex. Post-translationally, one or more lysine residues are methylated.

Its function is as follows. Forms part of the ribosomal stalk which helps the ribosome interact with GTP-bound translation factors. The sequence is that of Large ribosomal subunit protein uL11 from Thermus thermophilus (strain ATCC BAA-163 / DSM 7039 / HB27).